The primary structure comprises 249 residues: Ribosomal RNA small subunit methyltransferase J (249 aa).

S-adenosyl-L-methionine-binding positions include 97–98 (RD), 113–114 (ER), and Asp-167.

Belongs to the methyltransferase superfamily. RsmJ family.

Its subcellular location is the cytoplasm. It carries out the reaction guanosine(1516) in 16S rRNA + S-adenosyl-L-methionine = N(2)-methylguanosine(1516) in 16S rRNA + S-adenosyl-L-homocysteine + H(+). Functionally, specifically methylates the guanosine in position 1516 of 16S rRNA. This is Ribosomal RNA small subunit methyltransferase J from Aeromonas salmonicida (strain A449).